We begin with the raw amino-acid sequence, 673 residues long: Zinc finger protein 16 (673 aa).

Residues 1–10 (MPSLRTRREE) are compositionally biased toward basic and acidic residues. The tract at residues 1 to 42 (MPSLRTRREEAEMELSAPGPSPWTPAPQARVSDAPAVTHPGS) is disordered. Positions 62-210 (YQQPDCDTRT…GVPTAESPLI (149 aa)) are necessary for transcription activation. A C2H2-type 1; degenerate zinc finger spans residues 209 to 231 (LICNECGKTFRGNPDLIQRQIVH). The C2H2-type 2; degenerate zinc-finger motif lies at 237–259 (FMCDDCGKTFSQNSVLKNRHXSH). Residue Lys253 forms a Glycyl lysine isopeptide (Lys-Gly) (interchain with G-Cter in SUMO2) linkage. 7 C2H2-type zinc fingers span residues 284 to 306 (YTCTECGKAFSQNSSLKKHQKSH), 312 to 334 (YECNECGKAFRRSSNLIQHQRIH), 340 to 362 (YVCSECGKAFRRSSNLIKHHRTH), 368 to 390 (FECGECGKAFSQSAHLRKHQRVH), 396 to 418 (YECNDCGKPFSRVSNLIKHHRVH), 424 to 446 (YKCSDCGKAFSQSSSLIQHRRIH), and 452 to 474 (HVCNVCGKAFSYSSVLRKHQIIH). Positions 332-364 (RIHSGEKPYVCSECGKAFRRSSNLIKHHRTHTG) are required for nuclear localization. Residues 464-494 (SSVLRKHQIIHTGEKPYRCSVCGKAFSHSSA) are required for nuclear localization. Lys478 is subject to N6-acetyllysine. C2H2-type zinc fingers lie at residues 480–502 (YRCSVCGKAFSHSSALIQHQGVH), 508–530 (YACHECGKTFGRSSNLILHQRVH), 536–558 (YECTECGKTFSQSSTLIQHQRIH), 564–586 (HECNQCGKAFNRSSNLIHHQKVH), 592–614 (YTCVECGKGFSQSSHLIQHQIIH), 620–642 (YKCSECGKAFSQRSVLIQHQRIH), and 648–670 (YDCAACGKAFSQRSKLIKHQLIH).

Belongs to the krueppel C2H2-type zinc-finger protein family. As to quaternary structure, interacts with INCA1; the interaction inhibits INCA1 activity and induces the cell cycle process.

It localises to the nucleus. Acts as a transcriptional activator. Promotes cell proliferation by facilitating the cell cycle phase transition from the S to G2/M phase. Involved in both the hemin- and phorbol myristate acetate (PMA)-induced erythroid and megakaryocytic differentiation, respectively. Also plays a role as an inhibitor of cell apoptosis. The chain is Zinc finger protein 16 (ZNF16) from Pan paniscus (Pygmy chimpanzee).